The sequence spans 382 residues: Flap endonuclease 1 (382 aa).

The interval 1–105 (MGIKGLNAII…HELTKRSSRR (105 aa)) is N-domain. Mg(2+) is bound at residue aspartate 34. 2 residues coordinate DNA: arginine 47 and arginine 71. Mg(2+) is bound by residues aspartate 87, glutamate 156, glutamate 158, aspartate 177, and aspartate 179. The tract at residues 120 to 251 (EKMKQERRLV…VTALKLIKTH (132 aa)) is I-domain. Residue glutamate 156 participates in DNA binding. Positions 229 and 231 each coordinate DNA. Aspartate 231 serves as a coordination point for Mg(2+). The tract at residues 339 to 347 (IQGRLDGFF) is interaction with PCNA. Residues 358 to 382 (AAAAKRAQENKKLNKNKNKVTKGRR) are disordered. The span at 370 to 382 (LNKNKNKVTKGRR) shows a compositional bias: basic residues.

The protein belongs to the XPG/RAD2 endonuclease family. FEN1 subfamily. As to quaternary structure, interacts with PCNA. Three molecules of RAD27 bind to one PCNA trimer with each molecule binding to one PCNA monomer. PCNA stimulates the nuclease activity without altering cleavage specificity. Mg(2+) serves as cofactor. Phosphorylated. Phosphorylation upon DNA damage induces relocalization to the nuclear plasma.

It is found in the nucleus. The protein resides in the nucleolus. Its subcellular location is the nucleoplasm. The protein localises to the mitochondrion. Its function is as follows. Structure-specific nuclease with 5'-flap endonuclease and 5'-3' exonuclease activities involved in DNA replication and repair. During DNA replication, cleaves the 5'-overhanging flap structure that is generated by displacement synthesis when DNA polymerase encounters the 5'-end of a downstream Okazaki fragment. It enters the flap from the 5'-end and then tracks to cleave the flap base, leaving a nick for ligation. Also involved in the long patch base excision repair (LP-BER) pathway, by cleaving within the apurinic/apyrimidinic (AP) site-terminated flap. Acts as a genome stabilization factor that prevents flaps from equilibrating into structures that lead to duplications and deletions. Also possesses 5'-3' exonuclease activity on nicked or gapped double-stranded DNA, and exhibits RNase H activity. Also involved in replication and repair of rDNA and in repairing mitochondrial DNA. This is Flap endonuclease 1 from Saccharomyces cerevisiae (strain RM11-1a) (Baker's yeast).